A 579-amino-acid chain; its full sequence is MFS-type transporter ppz2 (579 aa).

A disordered region spans residues 1–23; the sequence is MQTATALEDSANAPSPAASSQGQ. Low complexity predominate over residues 10–20; the sequence is SANAPSPAASS. N-linked (GlcNAc...) asparagine glycosylation occurs at Asn-38. The next 14 helical transmembrane spans lie at 48–68, 83–103, 121–141, 145–165, 171–191, 203–223, 236–256, 269–289, 298–318, 336–356, 374–394, 403–423, 438–460, and 516–536; these read ALIM…NTII, AAYT…TMVW, LCFF…MLIA, IQGI…GDLF, GLYY…GPVV, WCFY…ILLL, IAAI…MILL, SATV…CFSW, LLPV…ACFI, AVLG…AVSI, LTPI…FIDL, IIVF…APMV, TSAY…QTVF, and SMWI…PFLG.

Belongs to the major facilitator superfamily. TCR/Tet family.

The protein localises to the membrane. Its function is as follows. MFS-type transporter; part of the gene cluster that mediates the biosynthesis of pyrrolopyrazines, secondary metabolites showing insecticidal activity. Probably involved in the secretion of peramine and other pyrrolopyrazines. This is MFS-type transporter ppz2 from Metarhizium majus (strain ARSEF 297).